The sequence spans 473 residues: MEMQMSNSDRYRIEHDSMGDLRVPIDALWGAQTQRAIENFPISGRSMPQGFIHALGFIKAAAAKVNAELGLLPKPMAKEIEAAALDVAAGRYDADFPVDIYQTGSGTSSNMNANEVIATLAMRATKEPIHPNDHVNLGQSSNDVVPTAIRISATLAVQGRLLPALKHLRKMINKRARGLGSVVKTGRTHLMDAMPLTFAQEFGAWSAQIVSAEARLNDTLKRLHRLPLGGTAIGTGINTDPHFGRNAVKVLSALTGIHFESANNKFEGLAAQDDLVELSGQFNALAVALMKIANDLRWMNAGPLAGLGEIELPALQPGSSIMPGKVNPVIPEAVVMVASQVIGHHTAVTVAGQSGNFQLNVTLPLIAYNLLESATLLGNVVMLLADKVIVGLKVRQDRVQEVLERNPILVTALNPIIGYEKAAVIAKRAYKEHRPVLEVACEESNLNPVELARLLDPTALTEGGIYVVGGGGG.

Substrate-binding positions include 105-107 (SGT), 130-133 (HPND), 140-142 (SSN), and Thr-188. The Proton donor/acceptor role is filled by His-189. The active site involves Ser-319. Residues Ser-320 and 325–327 (KVN) each bind substrate.

It belongs to the class-II fumarase/aspartase family. Fumarase subfamily. As to quaternary structure, homotetramer.

It localises to the cytoplasm. The catalysed reaction is (S)-malate = fumarate + H2O. It participates in carbohydrate metabolism; tricarboxylic acid cycle; (S)-malate from fumarate: step 1/1. Its function is as follows. Involved in the TCA cycle. Catalyzes the stereospecific interconversion of fumarate to L-malate. The sequence is that of Fumarate hydratase class II from Xylella fastidiosa (strain 9a5c).